A 436-amino-acid polypeptide reads, in one-letter code: Citrate synthase (436 aa).

Residues His313 and Asp371 contribute to the active site.

Belongs to the citrate synthase family. Homohexamer.

It carries out the reaction oxaloacetate + acetyl-CoA + H2O = citrate + CoA + H(+). It participates in carbohydrate metabolism; tricarboxylic acid cycle; isocitrate from oxaloacetate: step 1/2. The chain is Citrate synthase (aarA) from Acetobacter aceti.